We begin with the raw amino-acid sequence, 411 residues long: Lissencephaly-1 homolog (411 aa).

The 33-residue stretch at 9-41 (QREELNQAIADYLGSNGYGDSLETFRKEADVST) folds into the LisH domain. A coiled-coil region spans residues 56-83 (TSVIRLQKKVMELEAKLTEAEKEVIEGA). WD repeat units follow at residues 106–147 (GHRA…RSLK), 148–187 (GHTD…ECVK), 191–230 (GHDH…CVKT), 233–272 (GHRE…CKVE), 275–334 (DHEH…CLLT), 337–376 (GHDN…CMKT), and 379–411 (AHQH…WECR).

Belongs to the WD repeat LIS1/nudF family.

Its subcellular location is the cytoplasm. The protein localises to the cytoskeleton. It localises to the microtubule organizing center. It is found in the centrosome. Its function is as follows. Positively regulates the activity of the minus-end directed microtubule motor protein dynein. May enhance dynein-mediated microtubule sliding by targeting dynein to the microtubule plus end. Required for several dynein- and microtubule-dependent processes. This is Lissencephaly-1 homolog from Drosophila persimilis (Fruit fly).